Here is a 151-residue protein sequence, read N- to C-terminus: MSDDWVEIYTDGACKGNPGPGGWGALLIYKGVKRELWGGEPDTTNNRMELMAAIRALAELKRPCKVRLVTDSQYVMQGINDWMPNWKKRGWKTASKQPVKNADLWQQLDEQVNRHEVSWQWVRGHTGHPGNEQADLLANRGVVQAKRQPIV.

The region spanning 2–143 (SDDWVEIYTD…ADLLANRGVV (142 aa)) is the RNase H type-1 domain. Mg(2+) is bound by residues Asp-11, Glu-49, Asp-71, and Asp-135.

This sequence belongs to the RNase H family. In terms of assembly, monomer. It depends on Mg(2+) as a cofactor.

The protein resides in the cytoplasm. It carries out the reaction Endonucleolytic cleavage to 5'-phosphomonoester.. Functionally, endonuclease that specifically degrades the RNA of RNA-DNA hybrids. The chain is Ribonuclease H from Stutzerimonas stutzeri (strain A1501) (Pseudomonas stutzeri).